The sequence spans 56 residues: uncharacterized protein (56 aa).

This is an uncharacterized protein from Autographa californica nuclear polyhedrosis virus (AcMNPV).